The following is a 39-amino-acid chain: L-amino-acid oxidase (39 aa).

It belongs to the flavin monoamine oxidase family. FIG1 subfamily. Monomer. This is in contrast with most of its orthologs, that are non-covalently linked homodimers. FAD serves as cofactor. Post-translationally, N-glycosylated. As to expression, expressed by the venom gland.

The protein localises to the secreted. The catalysed reaction is an L-alpha-amino acid + O2 + H2O = a 2-oxocarboxylate + H2O2 + NH4(+). It carries out the reaction L-leucine + O2 + H2O = 4-methyl-2-oxopentanoate + H2O2 + NH4(+). Its function is as follows. Catalyzes an oxidative deamination of predominantly hydrophobic and aromatic L-amino acids, thus producing hydrogen peroxide that may contribute to the diverse toxic effects of this enzyme. Shows activity on L-Leu. Exhibits diverse biological activities, such as hemorrhage, hemolysis, edema, apoptosis of vascular endothelial cells or tumor cell lines, and antiparasitic activities, as well as regulation of platelet aggregation. Effects of snake L-amino oxidases on platelets are controversial, since they either induce aggregation or inhibit agonist-induced aggregation. These different effects are probably due to different experimental conditions. In addition, this protein inhibits dose-dependently the growth of Gram-positive, Gram-negative bacteria and yeast, probably by the generation of hydrogen peroxide. In Bothrops marajoensis (Marajo lancehead), this protein is L-amino-acid oxidase.